We begin with the raw amino-acid sequence, 720 residues long: MNNHVSSKPSTMKLKHTINPILLYFIHFLISLYTILTYIPFYFFSESRQEKSNRIKAKPVNSKPDSAYRSVNSLDGLASVLYPGCDTLDKVFTYAKNKFKNKRLLGTREVLNEEDEVQPNGKIFKKVILGQYNWLSYEDVFVRAFNFGNGLQMLGQKPKTNIAIFCETRAEWMIAAQACFMYNFQLVTLYATLGGPAIVHALNETEVTNIITSKELLQTKLKDIVSLVPRLRHIITVDGKPPTWSEFPKGIIVHTMAAVEALGAKASMENQPHSKPLPSDIAVIMYTSGSTGLPKGVMISHSNIIAGITGMAERIPELGEEDVYIGYLPLAHVLELSAELVCLSHGCRIGYSSPQTLADQSSKIKKGSKGDTSMLKPTLMAAVPEIMDRIYKNVMNKVSEMSSFQRNLFILAYNYKMEQISKGRNTPLCDSFVFRKVRSLLGGNIRLLLCGGAPLSATTQRFMNICFCCPVGQGYGLTESAGAGTISEVWDYNTGRVGAPLVCCEIKLKNWEEGGYFNTDKPHPRGEILIGGQSVTMGYYKNEAKTKADFFEDENGQRWLCTGDIGEFEPDGCLKIIDRKKDLVKLQAGEYVSLGKVEAALKNLPLVDNICAYANSYHSYVIGFVVPNQKELTELARKKGLKGTWEELCNSCEMENEVLKVLSEAAISASLEKFEIPVKIRLSPEPWTPETGLVTDAFKLKRKELKTHYQADIERMYGRK.

The helical; Signal-anchor for type III membrane protein transmembrane segment at 21 to 41 threads the bilayer; the sequence is ILLYFIHFLISLYTILTYIPF. Residues 42-720 are Cytoplasmic-facing; that stretch reads YFFSESRQEK…ADIERMYGRK (679 aa). Residue serine 683 is modified to Phosphoserine.

Belongs to the ATP-dependent AMP-binding enzyme family. Mg(2+) is required as a cofactor.

The protein resides in the mitochondrion outer membrane. The protein localises to the peroxisome membrane. Its subcellular location is the microsome membrane. It localises to the endoplasmic reticulum membrane. The enzyme catalyses a long-chain fatty acid + ATP + CoA = a long-chain fatty acyl-CoA + AMP + diphosphate. It catalyses the reaction (5Z,8Z,11Z,14Z)-eicosatetraenoate + ATP + CoA = (5Z,8Z,11Z,14Z)-eicosatetraenoyl-CoA + AMP + diphosphate. It carries out the reaction (E)-hexadec-2-enoate + ATP + CoA = (2E)-hexadecenoyl-CoA + AMP + diphosphate. The catalysed reaction is 15-hydroxy-(5Z,8Z,11Z,13E)-eicosatetraenoate + ATP + CoA = 15-hydroxy-(5Z,8Z,11Z,13E)-eicosatetraenoyl-CoA + AMP + diphosphate. The enzyme catalyses 12-hydroxy-(5Z,8Z,10E,14Z)-eicosatetraenoate + ATP + CoA = 12-hydroxy-(5Z,8Z,10E,14Z)-eicosatetraenoyl-CoA + AMP + diphosphate. It catalyses the reaction 5-hydroxy-(6E,8Z,11Z,14Z)-eicosatetraenoate + ATP + CoA = 5-hydroxy-(6E,8Z,11Z,14Z)-eicosatetraenoyl-CoA + AMP + diphosphate. It carries out the reaction 14,15-epoxy-(5Z,8Z,11Z)-eicosatrienoate + ATP + CoA = 14,15-epoxy-(5Z,8Z,11Z)-eicosatrienoyl-CoA + AMP + diphosphate. The catalysed reaction is 11,12-epoxy-(5Z,8Z,14Z)-eicosatrienoate + ATP + CoA = 11,12-epoxy-(5Z,8Z,14Z)-eicosatrienoyl-CoA + AMP + diphosphate. The enzyme catalyses a medium-chain fatty acid + ATP + CoA = a medium-chain fatty acyl-CoA + AMP + diphosphate. It catalyses the reaction hexadecanoate + ATP + CoA = hexadecanoyl-CoA + AMP + diphosphate. It carries out the reaction tetradecanoate + ATP + CoA = tetradecanoyl-CoA + AMP + diphosphate. The catalysed reaction is dodecanoate + ATP + CoA = dodecanoyl-CoA + AMP + diphosphate. The enzyme catalyses octadecanoate + ATP + CoA = octadecanoyl-CoA + AMP + diphosphate. It catalyses the reaction eicosanoate + ATP + CoA = eicosanoyl-CoA + AMP + diphosphate. It carries out the reaction (9Z)-octadecenoate + ATP + CoA = (9Z)-octadecenoyl-CoA + AMP + diphosphate. The catalysed reaction is (9Z)-hexadecenoate + ATP + CoA = (9Z)-hexadecenoyl-CoA + AMP + diphosphate. The enzyme catalyses (9Z,12Z)-octadecadienoate + ATP + CoA = (9Z,12Z)-octadecadienoyl-CoA + AMP + diphosphate. It catalyses the reaction (9Z,12Z,15Z)-octadecatrienoate + ATP + CoA = (9Z,12Z,15Z)-octadecatrienoyl-CoA + AMP + diphosphate. It carries out the reaction (4Z,7Z,10Z,13Z,16Z,19Z)-docosahexaenoate + ATP + CoA = (4Z,7Z,10Z,13Z,16Z,19Z)-docosahexaenoyl-CoA + AMP + diphosphate. The catalysed reaction is (5Z,8Z,11Z,14Z,17Z)-eicosapentaenoate + ATP + CoA = (5Z,8Z,11Z,14Z,17Z)-eicosapentaenoyl-CoA + AMP + diphosphate. The enzyme catalyses a fatty acid + ATP + CoA = a fatty acyl-CoA + AMP + diphosphate. Acyl-CoA synthetases (ACSL) activates long-chain fatty acids for both synthesis of cellular lipids, and degradation via beta-oxidation. Required for the incorporation of fatty acids into phosphatidylcholine, the major phospholipid located on the surface of VLDL (very low density lipoproteins). Has mainly an anabolic role in energy metabolism. Mediates hepatic lipogenesis. Preferentially uses myristate, laurate, arachidonate and eicosapentaenoate as substrates. Both isoforms exhibit the same level of activity. In Homo sapiens (Human), this protein is Fatty acid CoA ligase Acsl3.